The following is a 723-amino-acid chain: Probable G-protein coupled receptor 149 (723 aa).

Over 1-31 (MSVMPSNLSLNGTSFFAENHSIMDKPNEQRT) the chain is Extracellular. Residues N7, N11, and N19 are each glycosylated (N-linked (GlcNAc...) asparagine). A helical membrane pass occupies residues 32–52 (LNVFLFCSTFIIAFTVLLGSI). The Cytoplasmic segment spans residues 53 to 69 (YSLVSLLKLQNKSTISM). The chain crosses the membrane as a helical span at residues 70–90 (IVTSLSIDDLISIVPVIIFML). Over 91–106 (TQWSSDALPQPLCTTS) the chain is Extracellular. A disulfide bridge links C103 with C181. Residues 107–127 (ALIYLFQGISSNLKGSLIVSY) traverse the membrane as a helical segment. Residues 128 to 148 (NFYSINKTETMNCSASKRRVS) lie on the Cytoplasmic side of the membrane. A helical membrane pass occupies residues 149–169 (MVWAILSIWIVSLLICILPLC). The Extracellular portion of the chain corresponds to 170 to 188 (GWGKYIPTTWGCFTDHASS). A helical transmembrane segment spans residues 189–209 (YILFLFIVYSLCFCLLTVLSV). Over 210 to 306 (PLTYQLLCSD…SFTVGFAQKR (97 aa)) the chain is Cytoplasmic. The chain crosses the membrane as a helical span at residues 307 to 327 (FSLILALTKVILWLPMMIQMV). The Extracellular segment spans residues 328 to 338 (VQHITGYQSFS). The chain crosses the membrane as a helical span at residues 339-359 (FETLSFLLTLLAATVTPVFVL). Residues 360-723 (SEHWIHLPCG…RKREEDGNSN (364 aa)) are Cytoplasmic-facing. A disordered region spans residues 451–513 (TTDSARPGPA…ERRLSHEEGH (63 aa)). The segment covering 501–513 (EGPERRLSHEEGH) has biased composition (basic and acidic residues).

Belongs to the G-protein coupled receptor 1 family. Specific expression in peripheral nervous system, including nerve growth factor-dependent sensory and sympathetic neurons, as well as enteric neurons.

It is found in the cell membrane. Orphan receptor. The chain is Probable G-protein coupled receptor 149 (GPR149) from Gallus gallus (Chicken).